We begin with the raw amino-acid sequence, 217 residues long: Flagellar L-ring protein 2 (217 aa).

The first 15 residues, 1–15, serve as a signal peptide directing secretion; sequence MRILLALTWLAWLGA. Residue C16 is the site of N-palmitoyl cysteine attachment. C16 carries the S-diacylglycerol cysteine lipid modification.

Belongs to the FlgH family. In terms of assembly, the basal body constitutes a major portion of the flagellar organelle and consists of four rings (L,P,S, and M) mounted on a central rod.

The protein localises to the cell outer membrane. The protein resides in the bacterial flagellum basal body. Functionally, assembles around the rod to form the L-ring and probably protects the motor/basal body from shearing forces during rotation. This is Flagellar L-ring protein 2 from Burkholderia thailandensis (strain ATCC 700388 / DSM 13276 / CCUG 48851 / CIP 106301 / E264).